The primary structure comprises 98 residues: NADH-ubiquinone oxidoreductase chain 4L (98 aa).

A run of 3 helical transmembrane segments spans residues 1 to 21 (MTPV…GLAF), 29 to 49 (ALLC…LWAL), and 58 to 78 (VAPM…LALL).

The protein belongs to the complex I subunit 4L family.

Its subcellular location is the mitochondrion membrane. It catalyses the reaction a ubiquinone + NADH + 5 H(+)(in) = a ubiquinol + NAD(+) + 4 H(+)(out). Functionally, core subunit of the mitochondrial membrane respiratory chain NADH dehydrogenase (Complex I) which catalyzes electron transfer from NADH through the respiratory chain, using ubiquinone as an electron acceptor. Part of the enzyme membrane arm which is embedded in the lipid bilayer and involved in proton translocation. This chain is NADH-ubiquinone oxidoreductase chain 4L (MT-ND4L), found in Salmo salar (Atlantic salmon).